Consider the following 378-residue polypeptide: Alginate lyase (378 aa).

The first 28 residues, 1-28, serve as a signal peptide directing secretion; sequence MQTPKLIRPTLLSMAILSSMAWATGASA. Substrate is bound by residues 67–68, 140–141, and Y258; these read SK and HT. A disordered region spans residues 359 to 378; it reads LTKVYDPSHEKGDKGDNDGS. Residues 364–378 show a composition bias toward basic and acidic residues; it reads DPSHEKGDKGDNDGS.

This sequence belongs to the polysaccharide lyase 5 family.

It localises to the periplasm. The enzyme catalyses Eliminative cleavage of alginate to give oligosaccharides with 4-deoxy-alpha-L-erythro-hex-4-enuronosyl groups at their non-reducing ends and beta-D-mannuronate at their reducing end.. In terms of biological role, catalyzes the depolymerization of alginate by cleaving the beta-1,4 glycosidic bond between two adjacent sugar residues via a beta-elimination mechanism. May serve to degrade mislocalized alginate that is trapped in the periplasmic space. The sequence is that of Alginate lyase from Pseudomonas syringae pv. syringae (strain B728a).